The sequence spans 90 residues: Probable Fe(2+)-trafficking protein (90 aa).

This sequence belongs to the Fe(2+)-trafficking protein family.

Could be a mediator in iron transactions between iron acquisition and iron-requiring processes, such as synthesis and/or repair of Fe-S clusters in biosynthetic enzymes. The sequence is that of Probable Fe(2+)-trafficking protein from Pseudomonas fluorescens (strain Pf0-1).